Here is a 236-residue protein sequence, read N- to C-terminus: Purine nucleoside phosphorylase DeoD-type (236 aa).

Position 5 (His5) interacts with a purine D-ribonucleoside. Phosphate contacts are provided by residues Gly21, Arg25, Arg44, and 88 to 91 (RIGS). A purine D-ribonucleoside-binding positions include 180-182 (EME) and 204-205 (SD). The active-site Proton donor is Asp205.

This sequence belongs to the PNP/UDP phosphorylase family. Homohexamer; trimer of homodimers.

It catalyses the reaction a purine D-ribonucleoside + phosphate = a purine nucleobase + alpha-D-ribose 1-phosphate. The enzyme catalyses a purine 2'-deoxy-D-ribonucleoside + phosphate = a purine nucleobase + 2-deoxy-alpha-D-ribose 1-phosphate. In terms of biological role, catalyzes the reversible phosphorolytic breakdown of the N-glycosidic bond in the beta-(deoxy)ribonucleoside molecules, with the formation of the corresponding free purine bases and pentose-1-phosphate. The protein is Purine nucleoside phosphorylase DeoD-type of Hahella chejuensis (strain KCTC 2396).